Here is a 1687-residue protein sequence, read N- to C-terminus: Protein TOPAZ1 (1687 aa).

Disordered regions lie at residues 1–131 (MRRP…QPGF), 319–339 (EESS…KADE), 596–632 (LSRS…GNLT), and 880–916 (TSEV…SDDL). Residues 31–41 (GAAGGCGPEAG) show a composition bias toward gly residues. The segment covering 80–113 (RRVEGRRGQVSPSDRRGLEAAKEAEFPLQTERHT) has biased composition (basic and acidic residues). A compositionally biased stretch (polar residues) spans 598–622 (RSGSEVISNTTEDTQLTSDTQSLTG). The span at 897–916 (QSTDSKYVETPVKKEPSDDL) shows a compositional bias: basic and acidic residues.

It is found in the cytoplasm. It localises to the cytosol. In terms of biological role, important for normal spermatogenesis and male fertility. Specifically required for progression to the post-meiotic stages of spermatocyte development. Seems to be necessary for normal expression levels of a number of testis-expressed gene transcripts, although its role in this process is unclear. This Macaca fascicularis (Crab-eating macaque) protein is Protein TOPAZ1 (TOPAZ1).